Here is a 546-residue protein sequence, read N- to C-terminus: Chaperonin GroEL (546 aa).

ATP contacts are provided by residues 30-33 (TLGP), Lys51, 87-91 (DGTTT), Gly415, and Asp496. A disordered region spans residues 526–546 (PQKDAPAGGGMPDMGGMGGMM). The segment covering 532–546 (AGGGMPDMGGMGGMM) has biased composition (gly residues).

The protein belongs to the chaperonin (HSP60) family. In terms of assembly, forms a cylinder of 14 subunits composed of two heptameric rings stacked back-to-back. Interacts with the co-chaperonin GroES.

It localises to the cytoplasm. The catalysed reaction is ATP + H2O + a folded polypeptide = ADP + phosphate + an unfolded polypeptide.. Its function is as follows. Together with its co-chaperonin GroES, plays an essential role in assisting protein folding. The GroEL-GroES system forms a nano-cage that allows encapsulation of the non-native substrate proteins and provides a physical environment optimized to promote and accelerate protein folding. The protein is Chaperonin GroEL of Ruegeria pomeroyi (strain ATCC 700808 / DSM 15171 / DSS-3) (Silicibacter pomeroyi).